Reading from the N-terminus, the 426-residue chain is Probable imidazolonepropionase (426 aa).

4-imidazolone-5-propanoate-binding residues include tyrosine 159 and histidine 192. Position 159 (tyrosine 159) interacts with N-formimidoyl-L-glutamate. Histidine 260 lines the Fe(3+) pocket. Histidine 260 serves as a coordination point for Zn(2+). Glutamate 263 provides a ligand contact to 4-imidazolone-5-propanoate. Position 334 (aspartate 334) interacts with Fe(3+). Aspartate 334 contributes to the Zn(2+) binding site. Position 336 (asparagine 336) interacts with N-formimidoyl-L-glutamate.

This sequence belongs to the metallo-dependent hydrolases superfamily. HutI family. It depends on Zn(2+) as a cofactor. Fe(3+) is required as a cofactor.

It carries out the reaction 4-imidazolone-5-propanoate + H2O = N-formimidoyl-L-glutamate. Its pathway is amino-acid degradation; L-histidine degradation into L-glutamate; N-formimidoyl-L-glutamate from L-histidine: step 3/3. The chain is Probable imidazolonepropionase (AMDHD1) from Bos taurus (Bovine).